Here is a 391-residue protein sequence, read N- to C-terminus: Probable protein phosphatase 2C 32 (391 aa).

A disordered region spans residues 1–53 (MSCTVAIPSSPVFSPSRRPLSCKAASASASPESVSVAASSPAQAAPPAGSPLR). Over residues 8–51 (PSSPVFSPSRRPLSCKAASASASPESVSVAASSPAQAAPPAGSP) the composition is skewed to low complexity. A helical transmembrane segment spans residues 95-115 (LVVPVCGGAAAAAAAAAVAAV). One can recognise a PPM-type phosphatase domain in the interval 129–386 (EFAVYCRRGK…DDISIVIIQL (258 aa)). Mn(2+)-binding residues include Asp168, Gly169, Asp332, and Asp377.

It belongs to the PP2C family. Mg(2+) serves as cofactor. Mn(2+) is required as a cofactor.

The protein localises to the membrane. It carries out the reaction O-phospho-L-seryl-[protein] + H2O = L-seryl-[protein] + phosphate. The enzyme catalyses O-phospho-L-threonyl-[protein] + H2O = L-threonyl-[protein] + phosphate. The sequence is that of Probable protein phosphatase 2C 32 from Oryza sativa subsp. japonica (Rice).